A 246-amino-acid polypeptide reads, in one-letter code: Small ribosomal subunit protein uS2 (246 aa).

Belongs to the universal ribosomal protein uS2 family.

This is Small ribosomal subunit protein uS2 from Pseudomonas aeruginosa (strain LESB58).